The sequence spans 415 residues: Gamma-glutamyl phosphate reductase (415 aa).

The protein belongs to the gamma-glutamyl phosphate reductase family.

The protein localises to the cytoplasm. The catalysed reaction is L-glutamate 5-semialdehyde + phosphate + NADP(+) = L-glutamyl 5-phosphate + NADPH + H(+). It functions in the pathway amino-acid biosynthesis; L-proline biosynthesis; L-glutamate 5-semialdehyde from L-glutamate: step 2/2. In terms of biological role, catalyzes the NADPH-dependent reduction of L-glutamate 5-phosphate into L-glutamate 5-semialdehyde and phosphate. The product spontaneously undergoes cyclization to form 1-pyrroline-5-carboxylate. The polypeptide is Gamma-glutamyl phosphate reductase (Leuconostoc citreum (strain KM20)).